A 235-amino-acid chain; its full sequence is Ribosomal RNA-processing protein 17 (235 aa).

The stretch at 49–110 forms a coiled coil; sequence QRQKKAQEFI…AKNDKTEDLQ (62 aa). Over residues 99-108 the composition is skewed to basic and acidic residues; that stretch reads EDAKNDKTED. Disordered regions lie at residues 99–138 and 209–235; these read EDAK…SVKP and RVKK…KRRR. Phosphoserine occurs at positions 113, 116, and 122. The segment covering 217–235 has biased composition (basic and acidic residues); the sequence is TKNERRINQRKANDNKRRR.

Belongs to the RRP17 family.

It localises to the nucleus. It is found in the nucleolus. Essential protein involved in ribosomal RNA processing. In Saccharomyces cerevisiae (strain ATCC 204508 / S288c) (Baker's yeast), this protein is Ribosomal RNA-processing protein 17 (RRP17).